The primary structure comprises 376 residues: Chaperone protein DnaJ (376 aa).

The J domain maps to 5–70 (DYYEILGVSK…QKRAAYDQYG (66 aa)). Residues 131 to 209 (GVTKEIRIPT…CHGHGRVERS (79 aa)) form a CR-type zinc finger. The Zn(2+) site is built by Cys144, Cys147, Cys161, Cys164, Cys183, Cys186, Cys197, and Cys200. CXXCXGXG motif repeat units follow at residues 144–151 (CDVCHGSG), 161–168 (CPTCHGSG), 183–190 (CPHCQGRG), and 197–204 (CNKCHGHG).

It belongs to the DnaJ family. In terms of assembly, homodimer. It depends on Zn(2+) as a cofactor.

It localises to the cytoplasm. Participates actively in the response to hyperosmotic and heat shock by preventing the aggregation of stress-denatured proteins and by disaggregating proteins, also in an autonomous, DnaK-independent fashion. Unfolded proteins bind initially to DnaJ; upon interaction with the DnaJ-bound protein, DnaK hydrolyzes its bound ATP, resulting in the formation of a stable complex. GrpE releases ADP from DnaK; ATP binding to DnaK triggers the release of the substrate protein, thus completing the reaction cycle. Several rounds of ATP-dependent interactions between DnaJ, DnaK and GrpE are required for fully efficient folding. Also involved, together with DnaK and GrpE, in the DNA replication of plasmids through activation of initiation proteins. This Shigella dysenteriae serotype 1 (strain Sd197) protein is Chaperone protein DnaJ.